The primary structure comprises 232 residues: Chaperone protein CssC (232 aa).

An N-terminal signal peptide occupies residues 1 to 20 (MKSKLIILLTLVPFSSFSTG).

This sequence belongs to the periplasmic pilus chaperone family.

The protein localises to the periplasm. In terms of biological role, involved in the biogenesis of the CS6 fimbria. The polypeptide is Chaperone protein CssC (cssC) (Escherichia coli).